Reading from the N-terminus, the 338-residue chain is Glycerol-3-phosphate dehydrogenase [NAD(P)+] (338 aa).

4 residues coordinate NADPH: Ser-14, Tyr-15, His-35, and Lys-109. Sn-glycerol 3-phosphate contacts are provided by Lys-109, Gly-138, and Thr-140. NADPH is bound at residue Ala-142. Lys-194, Asp-247, Ser-257, Arg-258, and Asn-259 together coordinate sn-glycerol 3-phosphate. Lys-194 (proton acceptor) is an active-site residue. Position 258 (Arg-258) interacts with NADPH. Residues Val-282 and Glu-284 each coordinate NADPH.

It belongs to the NAD-dependent glycerol-3-phosphate dehydrogenase family.

The protein localises to the cytoplasm. It catalyses the reaction sn-glycerol 3-phosphate + NAD(+) = dihydroxyacetone phosphate + NADH + H(+). The catalysed reaction is sn-glycerol 3-phosphate + NADP(+) = dihydroxyacetone phosphate + NADPH + H(+). Its pathway is membrane lipid metabolism; glycerophospholipid metabolism. Catalyzes the reduction of the glycolytic intermediate dihydroxyacetone phosphate (DHAP) to sn-glycerol 3-phosphate (G3P), the key precursor for phospholipid synthesis. The protein is Glycerol-3-phosphate dehydrogenase [NAD(P)+] of Shewanella baltica (strain OS195).